A 133-amino-acid polypeptide reads, in one-letter code: Bacteriohemerythrin (133 aa).

Histidine 19, histidine 56, glutamate 60, histidine 75, histidine 79, histidine 115, and aspartate 120 together coordinate Fe cation.

It belongs to the hemerythrin family. Monomer.

In terms of biological role, oxygen-binding protein. May be involved in a storage mechanism or for delivery to oxygen-requiring enzymes. The oxygen-binding site contains two iron atoms. This chain is Bacteriohemerythrin, found in Campylobacter jejuni subsp. jejuni serotype O:23/36 (strain 81-176).